The following is a 329-amino-acid chain: Protein phosphatase 1 regulatory subunit 42 (329 aa).

LRR repeat units lie at residues 30–51 (KLTH…SVCR), 52–73 (NLTV…GFAS), 74–95 (NLTH…SSLH), 96–117 (KLSK…EELK), 118–139 (SLKE…AFDP), 148–169 (TLCI…APLR), and 170–191 (KMTH…ETVF). The region spanning 205–243 (NPVCHKPKYRDRLITVCKFLDDLDGKQINELSRQFLINW) is the LRRCT domain. Residues 268–329 (STSADFHLGP…SSTEWQSLKI (62 aa)) are disordered. Over residues 318-329 (GDSSTEWQSLKI) the composition is skewed to polar residues.

It localises to the cytoplasm. The protein localises to the cytoskeleton. The protein resides in the microtubule organizing center. It is found in the centrosome. In terms of biological role, may regulate phosphatase activity of protein phosphatase 1 (PP1) complexes. The polypeptide is Protein phosphatase 1 regulatory subunit 42 (ppp1r42) (Danio rerio (Zebrafish)).